Reading from the N-terminus, the 647-residue chain is Leucine-rich repeat and WD repeat-containing protein 1 (647 aa).

4 LRR repeats span residues 22-43, 48-69, 70-91, and 92-113; these read KIRS…PKLL, QLQE…LGLS, HLRV…CQFP, and KLEE…LKVS. The tract at residues 204–267 is disordered; it reads RTQVQKANSP…GSPVAGSDGS (64 aa). Phosphoserine occurs at positions 212, 243, 251, 259, and 264. 7 WD repeats span residues 282–335, 341–379, 383–422, 426–472, 484–526, 542–582, and 598–646; these read HSKN…LHKY, EFFS…LLHV, FCCG…LWDI, NQDY…CWDV, EVEF…LWSW, VVLA…LYDV, and APTQ…IWGR.

Belongs to the LRWD1 family. In terms of assembly, integral component of the ORC complex. Directly interacts with CDT1, GMNN and ORC2. Interacts with ORC2 only when non-ubiquitinated; this interaction prevents LRWD1 ubiquitination and degradation. Some of these interactions are regulated in a cell-cycle dependent manner. Interaction with ORC1 occurs predominantly during G1. Association with phosphorylated ORC1 during mitosis is not efficient. Interaction with CDT1 occurs during G1 phase, as well as during mitosis with phosphorylated CDT1. Interaction with GMNN occurs from G1/S to mitosis. Interaction with ORC2 is observed throughout the cell cycle. The stoichiometry of the ORCA/ORC/CDT1/GMNN complex is 1:1:1:2. Interacts with CUL4A and DDB1; this interaction may lead to ubiquitination. Ubiquitinated; undergoes 'Lys-48'-linked polyubiquitination leading to proteasomal degradation. Ubiquitination occurs within the WD repeats at the end of the G1 phase. Ubiquitination may be catalyzed by the CUL4-DDB1 E3 ubiquitin-protein ligase complex and other E3 ligases. In terms of tissue distribution, testis-specific. Drastically down-regulated in testis from patients with Sertoli cell-only syndrome (SCOS).

Its subcellular location is the nucleus. It is found in the chromosome. The protein localises to the centromere. The protein resides in the telomere. It localises to the cytoplasm. Its subcellular location is the cytoskeleton. It is found in the microtubule organizing center. The protein localises to the centrosome. The protein resides in the kinetochore. Required for G1/S transition. Recruits and stabilizes the origin recognition complex (ORC) onto chromatin during G1 to establish pre-replication complex (preRC) and to heterochromatic sites in post-replicated cells. Binds a combination of DNA and histone methylation repressive marks on heterochromatin. Binds histone H3 and H4 trimethylation marks H3K9me3, H3K27me3 and H4K20me3 in a cooperative manner with DNA methylation. Required for silencing of major satellite repeats. May be important ORC2, ORC3 and ORC4 stability. This Homo sapiens (Human) protein is Leucine-rich repeat and WD repeat-containing protein 1 (LRWD1).